The chain runs to 113 residues: Cholecystoxin (113 aa).

Residues 1–20 (MYGGICLCVLLAVLAISSSG) form the signal peptide. The propeptide occupies 21–79 (QHISRSLNGNSLAAAIEQNFPEKHRPARTPDSNQRVESNIDEKANLGVLLARYLQKARR). Residues 77–97 (ARRGTNGKPPDPKKESQDYLG) are disordered. Sulfotyrosine is present on Tyr-95. Phe-101 bears the Phenylalanine amide mark. A propeptide spanning residues 102–113 (GRRSAEEYEYSS) is cleaved from the precursor.

It belongs to the gastrin/cholecystokinin family. In terms of tissue distribution, expressed by the mandibular venom gland.

It is found in the secreted. Cholecystokinin-22: hypotensive neuropeptide that binds cholecystokinin receptor type A receptor (CCKAR). Functionally, cholecystokinin-8: hypotensive neuropeptide that binds cholecystokinin receptor type A receptor (CCKAR). The sequence is that of Cholecystoxin from Varanus varius (Lace monitor lizard).